The sequence spans 280 residues: F420-dependent methylenetetrahydromethanopterin dehydrogenase (280 aa).

The protein belongs to the MTD family.

The enzyme catalyses 5,10-methylenetetrahydromethanopterin + oxidized coenzyme F420-(gamma-L-Glu)(n) + 2 H(+) = 5,10-methenyl-5,6,7,8-tetrahydromethanopterin + reduced coenzyme F420-(gamma-L-Glu)(n). It functions in the pathway one-carbon metabolism; methanogenesis from CO(2); 5,10-methylene-5,6,7,8-tetrahydromethanopterin from 5,10-methenyl-5,6,7,8-tetrahydromethanopterin (coenzyme F420 route): step 1/1. Its function is as follows. Catalyzes the reversible reduction of methenyl-H(4)MPT(+) to methylene-H(4)MPT. The polypeptide is F420-dependent methylenetetrahydromethanopterin dehydrogenase (Methanocorpusculum labreanum (strain ATCC 43576 / DSM 4855 / Z)).